A 284-amino-acid polypeptide reads, in one-letter code: 4-diphosphocytidyl-2-C-methyl-D-erythritol kinase (284 aa).

Lys-14 is an active-site residue. 98–108 lines the ATP pocket; sequence PMGGGLGGGSS. Residue Asp-140 is part of the active site.

The protein belongs to the GHMP kinase family. IspE subfamily.

It catalyses the reaction 4-CDP-2-C-methyl-D-erythritol + ATP = 4-CDP-2-C-methyl-D-erythritol 2-phosphate + ADP + H(+). Its pathway is isoprenoid biosynthesis; isopentenyl diphosphate biosynthesis via DXP pathway; isopentenyl diphosphate from 1-deoxy-D-xylulose 5-phosphate: step 3/6. Functionally, catalyzes the phosphorylation of the position 2 hydroxy group of 4-diphosphocytidyl-2C-methyl-D-erythritol. The chain is 4-diphosphocytidyl-2-C-methyl-D-erythritol kinase from Shewanella sp. (strain MR-7).